Consider the following 750-residue polypeptide: Photosystem I P700 chlorophyll a apoprotein A1 (750 aa).

The next 8 membrane-spanning stretches (helical) occupy residues 70–93, 156–179, 195–219, 291–309, 346–369, 385–411, 433–455, and 531–549; these read VFSA…FHGA, LYCT…FHYH, LNHH…HVSL, TAHH…GHMY, WHAQ…HHMY, LSLF…IFMV, AIVS…LYIH, and FLVH…LILL. [4Fe-4S] cluster-binding residues include C573 and C582. Helical transmembrane passes span 589–610 and 664–686; these read HVFL…HFSW and LSAY…MFLF. H675 contributes to the chlorophyll a' binding site. Positions 683 and 691 each coordinate chlorophyll a. Position 692 (W692) interacts with phylloquinone. Residues 724-744 form a helical membrane-spanning segment; sequence AVGVAHYLLGGIVTTWAFFLA.

It belongs to the PsaA/PsaB family. As to quaternary structure, the PsaA/B heterodimer binds the P700 chlorophyll special pair and subsequent electron acceptors. PSI consists of a core antenna complex that captures photons, and an electron transfer chain that converts photonic excitation into a charge separation. The eukaryotic PSI reaction center is composed of at least 11 subunits. P700 is a chlorophyll a/chlorophyll a' dimer, A0 is one or more chlorophyll a, A1 is one or both phylloquinones and FX is a shared 4Fe-4S iron-sulfur center. is required as a cofactor.

The protein localises to the plastid. It is found in the chloroplast thylakoid membrane. It carries out the reaction reduced [plastocyanin] + hnu + oxidized [2Fe-2S]-[ferredoxin] = oxidized [plastocyanin] + reduced [2Fe-2S]-[ferredoxin]. Functionally, psaA and PsaB bind P700, the primary electron donor of photosystem I (PSI), as well as the electron acceptors A0, A1 and FX. PSI is a plastocyanin-ferredoxin oxidoreductase, converting photonic excitation into a charge separation, which transfers an electron from the donor P700 chlorophyll pair to the spectroscopically characterized acceptors A0, A1, FX, FA and FB in turn. Oxidized P700 is reduced on the lumenal side of the thylakoid membrane by plastocyanin. The polypeptide is Photosystem I P700 chlorophyll a apoprotein A1 (Pinus koraiensis (Korean pine)).